A 419-amino-acid polypeptide reads, in one-letter code: Synaptosomal-associated protein 47 (419 aa).

T-SNARE coiled-coil homology domains follow at residues 109–171 (AANP…LTEL) and 356–418 (KDWP…MRKL).

Belongs to the SVAP1 family. Associates with the BLOC-1 complex. Interacts with BLOC1S6. Forms a complex containing SNAP47, VAMP2 and STX1A.

The protein resides in the endomembrane system. Its subcellular location is the cytoplasm. It localises to the perinuclear region. May play a role in intracellular membrane fusion. This chain is Synaptosomal-associated protein 47 (Snap47), found in Rattus norvegicus (Rat).